An 85-amino-acid chain; its full sequence is V-type proton ATPase subunit f (85 aa).

Over 1–10 the chain is Lumenal; it reads MRPVVSTGKA. A helical transmembrane segment spans residues 11 to 31; the sequence is WCCTVLSAFGVVILSVIAHLF. At 32-54 the chain is on the cytoplasmic side; the sequence is NTNHESFVGSINDPEDGPAVAHT. The helical transmembrane segment at 55–75 threads the bilayer; it reads VYLAALVYLVFFVFCGFQVYL. Over 76–85 the chain is Lumenal; the sequence is ARRKPSIELR.

In terms of assembly, V-ATPase is a heteromultimeric enzyme composed of a peripheral catalytic V1 complex (components A to H) attached to an integral membrane V0 proton pore complex (components: a, c, c', c'', d, e, f and VOA1).

The protein resides in the endoplasmic reticulum membrane. It is found in the vacuole membrane. Its function is as follows. Accessory component of the V0 complex of vacuolar(H+)-ATPase (V-ATPase), a multisubunit enzyme composed of a peripheral complex (V1) that hydrolyzes ATP and a membrane integral complex (V0) that translocates protons. V-ATPase is responsible for acidifying and maintaining the pH of intracellular compartments. This Saccharomyces cerevisiae (strain ATCC 204508 / S288c) (Baker's yeast) protein is V-type proton ATPase subunit f.